The primary structure comprises 104 residues: N(4)-acetylcytidine amidohydrolase (104 aa).

In terms of domain architecture, ASCH spans 6 to 94 (ITFFQRFQND…IAEIYPNQTQ (89 aa)). Catalysis depends on lysine 21, which acts as the Proton acceptor. Threonine 24 acts as the Nucleophile in catalysis. The active-site Proton donor is glutamate 74.

Belongs to the N(4)-acetylcytidine amidohydrolase family.

The enzyme catalyses N(4)-acetylcytidine + H2O = cytidine + acetate + H(+). It catalyses the reaction N(4)-acetyl-2'-deoxycytidine + H2O = 2'-deoxycytidine + acetate + H(+). It carries out the reaction N(4)-acetylcytosine + H2O = cytosine + acetate + H(+). Its function is as follows. Catalyzes the hydrolysis of N(4)-acetylcytidine (ac4C). In Salmonella dublin (strain CT_02021853), this protein is N(4)-acetylcytidine amidohydrolase (yqfB).